The chain runs to 294 residues: Acetylglutamate kinase (294 aa).

Residues 60 to 61 (GG), Arg82, and Asn186 each bind substrate.

The protein belongs to the acetylglutamate kinase family. ArgB subfamily.

The protein localises to the cytoplasm. The catalysed reaction is N-acetyl-L-glutamate + ATP = N-acetyl-L-glutamyl 5-phosphate + ADP. It functions in the pathway amino-acid biosynthesis; L-arginine biosynthesis; N(2)-acetyl-L-ornithine from L-glutamate: step 2/4. Functionally, catalyzes the ATP-dependent phosphorylation of N-acetyl-L-glutamate. This is Acetylglutamate kinase from Methanospirillum hungatei JF-1 (strain ATCC 27890 / DSM 864 / NBRC 100397 / JF-1).